The following is a 341-amino-acid chain: MRLCLIPWNTGTPQRVLPPVVWSPPSRKKPVLSARNSRMFGYLSPVRIPRLRGKFNLQLPSLDEQVIPARLPKMEVRAEEPKEATEVKDQVQTQEQEDNKRGPCSNGEAASTSRPLETQGNLTSSWYNPRPLEGNVHLKSLTENNQTDKAQVHAVSFYSKGHGVASSHSPAGGILPFGKPDPLPTVLPAPVPGCSLWPEKAALKVLGKDHLPSSPGLLTVGEDMQPKDPAALGSSRSSPPRAAGHRSRKRKLSGPPLQLQPTPPLQLRWERDERPPPAKLPCLSPEALLVGQASQREGRLQQGNMRKNMRVLSRTSKFRRLRQLLRRRKKRQQVRSISACT.

The span at 78–89 (AEEPKEATEVKD) shows a compositional bias: basic and acidic residues. Disordered regions lie at residues 78-131 (AEEP…NPRP) and 216-282 (GLLT…KLPC). Residues 108–127 (EAASTSRPLETQGNLTSSWY) are compositionally biased toward polar residues. Residues 243–252 (AGHRSRKRKL) show a composition bias toward basic residues.

This sequence belongs to the UPF0607 family.

The chain is Putative UPF0607 protein ENSP00000381514 from Homo sapiens (Human).